The chain runs to 657 residues: Histidine ammonia-lyase (657 aa).

Residues 253 to 255 (ASG) constitute a cross-link (5-imidazolinone (Ala-Gly)). At S254 the chain carries 2,3-didehydroalanine (Ser). Position 396 is a phosphothreonine (T396). S635 is subject to Phosphoserine. A Phosphothreonine modification is found at T637. Position 648 is a phosphoserine (S648).

The protein belongs to the PAL/histidase family. Post-translationally, contains an active site 4-methylidene-imidazol-5-one (MIO), which is formed autocatalytically by cyclization and dehydration of residues Ala-Ser-Gly.

It carries out the reaction L-histidine = trans-urocanate + NH4(+). It functions in the pathway amino-acid degradation; L-histidine degradation into L-glutamate; N-formimidoyl-L-glutamate from L-histidine: step 1/3. In Bos taurus (Bovine), this protein is Histidine ammonia-lyase (HAL).